The chain runs to 246 residues: UDP-N-acetyl-D-mannosaminuronic acid transferase (246 aa).

This sequence belongs to the glycosyltransferase 26 family.

The catalysed reaction is UDP-N-acetyl-alpha-D-mannosaminouronate + N-acetyl-alpha-D-glucosaminyl-di-trans,octa-cis-undecaprenyl diphosphate = beta-D-ManNAcA-(1-&gt;4)-alpha-D-GlcNAc-di-trans,octa-cis-undecaprenyl diphosphate + UDP + H(+). It participates in bacterial outer membrane biogenesis; enterobacterial common antigen biosynthesis. Functionally, catalyzes the synthesis of Und-PP-GlcNAc-ManNAcA (Lipid II), the second lipid-linked intermediate involved in enterobacterial common antigen (ECA) synthesis. This is UDP-N-acetyl-D-mannosaminuronic acid transferase from Escherichia fergusonii (strain ATCC 35469 / DSM 13698 / CCUG 18766 / IAM 14443 / JCM 21226 / LMG 7866 / NBRC 102419 / NCTC 12128 / CDC 0568-73).